Consider the following 532-residue polypeptide: Protein DETOXIFICATION 48 (532 aa).

The next 12 helical transmembrane spans lie at 65 to 85 (ISGPTAMTGLLMYSRAMISML), 95 to 115 (LAGGSLSIGFANITGYSVISG), 136 to 156 (LGLTLQRTVLLLLSCSVPISF), 174 to 194 (ISSVAQQFLLFAIPDLFLLSL), 211 to 231 (VTYSTAVSVLLHVPLNYLLVV), 235 to 255 (MGVAGVAIAMVLTNLNLVVLL), 279 to 301 (GWSALLSLAIPTCVSVCLEWWWY), 322 to 342 (GILIQTTALVYVFPSSLSLGV), 363 to 383 (IISLFCAIALGLMAMVFAVLV), 397 to 417 (ILQLTSIALPIVGLCELGNCP), 437 to 457 (INLGSFYFVGMPVAILFGFVF), and 464 to 484 (LWFGLLAAQATCASLMLCALL). Positions 496–532 (EELTSQTPGKSPPLLPIASSKSRSTSGTEDMMRTMLV) are disordered. The segment covering 514–523 (SSKSRSTSGT) has biased composition (polar residues).

Belongs to the multi antimicrobial extrusion (MATE) (TC 2.A.66.1) family. In terms of tissue distribution, highly expressed in shoot apices relative to leaves. At vegetative stages, highly expressed at the stipules. At reproductive stages, most highly expressed in the mature pollen. Also expressed in the tips of sepals.

It is found in the golgi apparatus membrane. The protein resides in the late endosome membrane. Functions as a multidrug and toxin extrusion transporter. Contributes to iron homeostasis during stress responses and senescence. Could be involved in specifying the lateral organ initiation rate. May act as a negative regulator of hypocotyl cell elongation in the light. The protein is Protein DETOXIFICATION 48 of Arabidopsis thaliana (Mouse-ear cress).